The primary structure comprises 331 residues: Glycerophosphodiester phosphodiesterase 1 (331 aa).

At 1–2 the chain is on the cytoplasmic side; the sequence is MW. The helical transmembrane segment at 3–23 threads the bilayer; sequence LWEEQGGLMGPFSFLLLVLLL. Residues 24–254 are Lumenal-facing; sequence LTRSPFNACL…WKQSMFVALD (231 aa). The region spanning 65-331 is the GP-PDE domain; the sequence is VSAIAHRGGS…SMLEDCTPEF (267 aa). Glutamate 97 and aspartate 99 together coordinate Mg(2+). N-linked (GlcNAc...) asparagine glycosylation occurs at asparagine 168. Aspartate 174 contributes to the Mg(2+) binding site. N-linked (GlcNAc...) asparagine glycosylation is present at asparagine 198. Residues 255 to 275 traverse the membrane as a helical segment; the sequence is ILLDWSMHNILWYLCGVSAFL. The Cytoplasmic portion of the chain corresponds to 276–331; it reads AQKDFISPDYVKKWSAKGIQVVAWTVNTFDEKSYYESHLGSSYITDSMLEDCTPEF.

Belongs to the glycerophosphoryl diester phosphodiesterase family. As to quaternary structure, interacts with PRAF2. Interacts with RGS16. It depends on Mg(2+) as a cofactor. N-glycosylated.

The protein resides in the cell membrane. Its subcellular location is the cytoplasmic vesicle membrane. It catalyses the reaction sn-glycero-3-phospho-1D-myo-inositol + H2O = myo-inositol + sn-glycerol 3-phosphate + H(+). It carries out the reaction 1-O-(1Z-octadecenyl)-sn-glycero-3-phospho-(N-5Z,8Z,11Z,14Z-eicosatetraenoyl)-ethanolamine + H2O = 1-O-(1Z-octadecenyl)-sn-glycero-3-phosphate + N-(5Z,8Z,11Z,14Z-eicosatetraenoyl)-ethanolamine + H(+). The enzyme catalyses 1-O-(1Z-octadecenyl)-sn-glycero-3-phospho-(N-9Z-octadecenoyl)-ethanolamine + H2O = 1-O-(1Z-octadecenyl)-sn-glycero-3-phosphate + N-(9Z-octadecenoyl) ethanolamine + H(+). The catalysed reaction is 1-O-(1Z-octadecenyl)-sn-glycero-3-phospho-N-hexadecanoyl-ethanolamine + H2O = 1-O-(1Z-octadecenyl)-sn-glycero-3-phosphate + N-hexadecanoylethanolamine + H(+). It catalyses the reaction N-(4Z,7Z,10Z,13Z,16Z,19Z)-docosahexaenoyl-sn-glycero-3-phosphoethanolamine + H2O = N-(4Z,7Z,10Z,13Z,16Z,19Z)-docosahexaenoyl ethanolamine + sn-glycerol 3-phosphate + H(+). It carries out the reaction N-eicosanoyl-sn-glycero-3-phosphoethanolamine + H2O = N-eicosanoyl ethanolamine + sn-glycerol 3-phosphate + H(+). The enzyme catalyses N-hexadecanoyl-sn-glycero-3-phosphoethanolamine + H2O = N-hexadecanoylethanolamine + sn-glycerol 3-phosphate + H(+). The catalysed reaction is N-(9Z-octadecenoyl)-sn-glycero-3-phosphoethanolamine + H2O = N-(9Z-octadecenoyl) ethanolamine + sn-glycerol 3-phosphate + H(+). It catalyses the reaction N-(5Z,8Z,11Z,14Z-eicosatetraenoyl)-sn-glycero-3-phosphoethanolamine + H2O = N-(5Z,8Z,11Z,14Z-eicosatetraenoyl)-ethanolamine + sn-glycerol 3-phosphate + H(+). Its activity is regulated as follows. Inhibited by EDTA, calcium chloride, and zinc chloride. Enhanced by magnesium chloride. Glycerophosphodiester phosphodiesterase activity can be modulated by G-protein signaling pathways. In terms of biological role, hydrolyzes the phosphodiester bond of glycerophosphodiesters such as glycerophosphoinositol (GroPIns) and glycerophosphoethanolamine (GroPEth), to yield a glycerol phosphate and an alcohol. Hydrolyzes glycerophospho-N-acylethanolamines to N-acylethanolamines in the brain and participates in bioactive N-acylethanolamine biosynthesis such as anandamide (an endocannabinoid), N-palmitoylethanolamine (an anti-inflammatory), and N-oleoylethanolamine (an anorexic). In addition, has a lysophospholipase D activity by hydrolyzing N-acyl-lysoplasmenylethanolamine (N-acyl-lysoPlsEt) to N-acylethanolamine. However lysophospholipase D activity is lower than glycerophosphodiester phosphodiesterase activity. Has little or no activity towards glycerophosphocholine. This chain is Glycerophosphodiester phosphodiesterase 1, found in Bos taurus (Bovine).